Here is a 435-residue protein sequence, read N- to C-terminus: Xylose isomerase (435 aa).

Residues His-100 and Asp-103 contribute to the active site. 7 residues coordinate Mg(2+): Glu-231, Glu-267, His-270, Asp-295, Asp-306, Asp-308, and Asp-338.

This sequence belongs to the xylose isomerase family. In terms of assembly, homotetramer. Mg(2+) is required as a cofactor.

It localises to the cytoplasm. The catalysed reaction is alpha-D-xylose = alpha-D-xylulofuranose. In Brucella anthropi (strain ATCC 49188 / DSM 6882 / CCUG 24695 / JCM 21032 / LMG 3331 / NBRC 15819 / NCTC 12168 / Alc 37) (Ochrobactrum anthropi), this protein is Xylose isomerase.